Consider the following 782-residue polypeptide: DNA repair and recombination protein RAD54-like (782 aa).

The span at 1–20 (MRRSLAPSQRGGQRLSSRND) shows a compositional bias: polar residues. A disordered region spans residues 1–28 (MRRSLAPSQRGGQRLSSRNDFTPPLLKK). The interval 2-9 (RRSLAPSQ) is required for chromatin remodeling, strand pairing activities and coupling of ATPase activity. At threonine 22 the chain carries Phosphothreonine. A Helicase ATP-binding domain is found at 168 to 343 (EGKRGNFNGC…FSLVNFVNPE (176 aa)). An ATP-binding site is contributed by 181-188 (DEMGLGKT). The DEGH box signature appears at 294-297 (DEGH). A Helicase C-terminal domain is found at 501–658 (LLDFMLAAIR…NNESAEKHFT (158 aa)). Residues 741 to 753 (SQKIETTPATETS) are compositionally biased toward polar residues. A disordered region spans residues 741–782 (SQKIETTPATETSVEAKPEPERRKRPAMPLSDDSADEDFQGF). Residues 773 to 782 (DSADEDFQGF) show a composition bias toward acidic residues.

Belongs to the SNF2/RAD54 helicase family. Interacts (via N-terminus) with spn-A/Rad51.

The protein localises to the nucleus. Involved in mitotic DNA repair and meiotic recombination. Functions in the recombinational DNA repair pathway. Essential for interhomolog gene conversion (GC), but may have a less important role in intersister GC than spn-A/Rad51. In the presence of DNA, spn-A/Rad51 enhances the ATPase activity of okr/Rad54. The protein is DNA repair and recombination protein RAD54-like of Drosophila pseudoobscura pseudoobscura (Fruit fly).